The chain runs to 245 residues: Probable transcriptional regulatory protein SUN_1622 (245 aa).

The protein belongs to the TACO1 family.

It localises to the cytoplasm. The polypeptide is Probable transcriptional regulatory protein SUN_1622 (Sulfurovum sp. (strain NBC37-1)).